The primary structure comprises 756 residues: 5-methyltetrahydropteroyltriglutamate--homocysteine methyltransferase (756 aa).

Residues 16-19 (RELK) and lysine 112 contribute to the 5-methyltetrahydropteroyltri-L-glutamate site. L-homocysteine is bound by residues 432–434 (IGS) and glutamate 485. L-methionine is bound by residues 432-434 (IGS) and glutamate 485. Residues 516-517 (RC) and tryptophan 562 contribute to the 5-methyltetrahydropteroyltri-L-glutamate site. Aspartate 600 lines the L-homocysteine pocket. Position 600 (aspartate 600) interacts with L-methionine. Position 606 (glutamate 606) interacts with 5-methyltetrahydropteroyltri-L-glutamate. Residues histidine 642, cysteine 644, and glutamate 666 each coordinate Zn(2+). Histidine 695 acts as the Proton donor in catalysis. Cysteine 727 lines the Zn(2+) pocket.

This sequence belongs to the vitamin-B12 independent methionine synthase family. Zn(2+) serves as cofactor.

The catalysed reaction is 5-methyltetrahydropteroyltri-L-glutamate + L-homocysteine = tetrahydropteroyltri-L-glutamate + L-methionine. The protein operates within amino-acid biosynthesis; L-methionine biosynthesis via de novo pathway; L-methionine from L-homocysteine (MetE route): step 1/1. Functionally, catalyzes the transfer of a methyl group from 5-methyltetrahydrofolate to homocysteine resulting in methionine formation. This chain is 5-methyltetrahydropteroyltriglutamate--homocysteine methyltransferase, found in Haemophilus influenzae (strain ATCC 51907 / DSM 11121 / KW20 / Rd).